The chain runs to 253 residues: Porin thermoregulatory protein EnvY (253 aa).

The 98-residue stretch at 149 to 246 (DSVCRIIQSD…GLTPLNYLAK (98 aa)) folds into the HTH araC/xylS-type domain. 2 DNA-binding regions (H-T-H motif) span residues 166 to 187 (RIVA…KNEN) and 213 to 236 (ITQV…KAFY).

Its function is as follows. Influences the temperature-dependent expression of several E.coli envelope proteins, most notably the porins OmpF and OmpC and the lambda receptor, LamB. In Escherichia coli (strain K12), this protein is Porin thermoregulatory protein EnvY (envY).